A 135-amino-acid polypeptide reads, in one-letter code: Hemoglobin subunit alpha (135 aa).

The Globin domain maps to 1-135; that stretch reads AAVVALWGKI…VALALAERYK (135 aa). His-52 contributes to the O2 binding site. Residue His-81 participates in heme b binding.

The protein belongs to the globin family. In terms of assembly, hb1 is a heterotetramer of two alpha chains and two beta-1 chains. Hb2 is a heterotetramer of two alpha chains and two beta-2 chains. The N-terminus is blocked. In terms of tissue distribution, red blood cells.

Involved in oxygen transport from gills to the various peripheral tissues. The protein is Hemoglobin subunit alpha of Dissostichus eleginoides (Patagonian toothfish).